A 442-amino-acid chain; its full sequence is 2-oxoisovalerate dehydrogenase subunit alpha, mitochondrial (442 aa).

The transit peptide at M1 to F42 directs the protein to the mitochondrion. The interval A30–Q50 is disordered. 2 residues coordinate thiamine diphosphate: Y155 and R156. S203 provides a ligand contact to K(+). Position 204 (S204) interacts with thiamine diphosphate. The K(+) site is built by P205, T208, and Q209. E235 contacts Mg(2+). 3 residues coordinate thiamine diphosphate: G236, A237, and R262. Mg(2+)-binding residues include N264 and Y266. Thiamine diphosphate is bound at residue H333. Residue S334 is modified to Phosphoserine; by BCKDK. T335 carries the post-translational modification Phosphothreonine. Phosphoserine is present on residues S336 and S344. Residue K353 is modified to N6-acetyllysine; alternate. At K353 the chain carries N6-succinyllysine; alternate. At K377 the chain carries N6-succinyllysine.

It belongs to the BCKDHA family. In terms of assembly, heterotetramer of 2 alpha/BCKDHA and 2 beta chains/BCKDHB that forms the branched-chain alpha-keto acid decarboxylase (E1) component of the BCKD complex. The branched-chain alpha-ketoacid dehydrogenase is a large complex composed of three major building blocks E1, E2 and E3. It is organized around E2, a 24-meric cubic core composed of DBT, to which are associated 6 to 12 copies of E1, and approximately 6 copies of the dehydrogenase E3, a DLD dimer. Interacts with PPM1K. It depends on thiamine diphosphate as a cofactor. Requires Mg(2+) as cofactor. In terms of processing, phosphorylated at Ser-334 by BCKDK and dephosphorylated by protein phosphatase PPM1K.

It is found in the mitochondrion matrix. The enzyme catalyses N(6)-[(R)-lipoyl]-L-lysyl-[protein] + 3-methyl-2-oxobutanoate + H(+) = N(6)-[(R)-S(8)-2-methylpropanoyldihydrolipoyl]-L-lysyl-[protein] + CO2. Together with BCKDHB forms the heterotetrameric E1 subunit of the mitochondrial branched-chain alpha-ketoacid dehydrogenase (BCKD) complex. The BCKD complex catalyzes the multi-step oxidative decarboxylation of alpha-ketoacids derived from the branched-chain amino-acids valine, leucine and isoleucine producing CO2 and acyl-CoA which is subsequently utilized to produce energy. The E1 subunit catalyzes the first step with the decarboxylation of the alpha-ketoacid forming an enzyme-product intermediate. A reductive acylation mediated by the lipoylamide cofactor of E2 extracts the acyl group from the E1 active site for the next step of the reaction. The polypeptide is 2-oxoisovalerate dehydrogenase subunit alpha, mitochondrial (Mus musculus (Mouse)).